The following is a 238-amino-acid chain: Leucine-rich repeat-containing protein 57 (238 aa).

8 LRR repeats span residues 39–60, 62–84, 85–106, 108–129, 131–152, 153–175, 176–196, and 201–221; these read NLRT…MGKF, LLKS…CKLK, KLET…FVQL, ALKT…LFKL, NLDV…VSGL, QAIE…SHCP, RLKV…PPSI, and QISL…RDLE.

This Xenopus laevis (African clawed frog) protein is Leucine-rich repeat-containing protein 57 (lrrc57).